The sequence spans 134 residues: Lymphocyte antigen 6 complex locus protein G6d (134 aa).

Residues 1 to 19 (MNSQLIGILFSALLGAALG) form the signal peptide. Residues 22-121 (MRCYDCGGGP…ASSSTPLCIL (100 aa)) enclose the UPAR/Ly6 domain. 5 disulfides stabilise this stretch: cysteine 24–cysteine 48, cysteine 27–cysteine 35, cysteine 42–cysteine 76, cysteine 82–cysteine 101, and cysteine 102–cysteine 107. Residue threonine 68 is glycosylated (O-linked (GalNAc...) threonine). A lipid anchor (GPI-anchor amidated asparagine) is attached at asparagine 108. Residues 109-134 (GAVASSSTPLCILAAVTTLAWLLSGQ) constitute a propeptide, removed in mature form.

As to quaternary structure, homodimer. In terms of processing, O-glycosylated.

It localises to the cell membrane. The polypeptide is Lymphocyte antigen 6 complex locus protein G6d (Ly6g6d) (Rattus norvegicus (Rat)).